We begin with the raw amino-acid sequence, 386 residues long: Patatin group M-1 (386 aa).

Positions 1–23 (MATTKSFLILFFMILATTSSTCA) are cleaved as a signal peptide. The region spanning 32–229 (LSIDGGGIKG…TVGDPALLSL (198 aa)) is the PNPLA domain. A GXGXXG motif is present at residues 36 to 41 (GGGIKG). The GXSXG signature appears at 75-79 (GTSTG). The active-site Nucleophile is the serine 77. Residue asparagine 115 is glycosylated (N-linked (GlcNAc...) asparagine). The active-site Proton acceptor is aspartate 215. Positions 215–217 (DGG) match the DGA/G motif.

The protein belongs to the patatin family. As to expression, tuber.

It is found in the vacuole. In terms of biological role, probable lipolytic acyl hydrolase (LAH), an activity which is thought to be involved in the response of tubers to pathogens. This is Patatin group M-1 from Solanum tuberosum (Potato).